We begin with the raw amino-acid sequence, 305 residues long: Olfactory receptor 4F4 (305 aa).

Residues 1–18 (MVTEFIFLGLSDSQELQT) lie on the Extracellular side of the membrane. Residues 19–42 (FLFMLFFVFYGGIVFGNLLIVITV) form a helical membrane-spanning segment. At 43–50 (VSDSHLHS) the chain is on the cytoplasmic side. The chain crosses the membrane as a helical span at residues 51–72 (PMYFLLANLSLIDLSLSSVTAP). Residues 73–93 (KMITDFFSQRKVISFKGCLVQ) lie on the Extracellular side of the membrane. Cysteines 90 and 182 form a disulfide. The helical transmembrane segment at 94-113 (IFLLHFFGGSEMVILIAMGF) threads the bilayer. Over 114–132 (DRYIAICKPLHYTTIMCGN) the chain is Cytoplasmic. Residues 133–151 (ACVGIMAVAWGIGFLHSVS) form a helical membrane-spanning segment. Residues 152–188 (QLAFAVHLPFCGPNEVDSFYCDLPRVIKLACTDTYRL) are Extracellular-facing. A helical transmembrane segment spans residues 189-212 (DIMVIANSGVLTVCSFVLLIISYT). Residues 213–228 (IILMTIQHCPLDKSSK) lie on the Cytoplasmic side of the membrane. The helical transmembrane segment at 229–251 (ALSTLTAHITVVLLFFGPCVFIY) threads the bilayer. Residues 252 to 262 (AWPFPIKSLDK) lie on the Extracellular side of the membrane. The helical transmembrane segment at 263–282 (FLAVFYSVITPLLNPIIYTL) threads the bilayer. The Cytoplasmic segment spans residues 283-305 (RNKDMKTAIRRLRKWDAHSSVKF).

Belongs to the G-protein coupled receptor 1 family.

It localises to the cell membrane. In terms of biological role, odorant receptor. This chain is Olfactory receptor 4F4 (OR4F4), found in Homo sapiens (Human).